The chain runs to 179 residues: MVQAWYMDESTADPRMPHRAQPDRPVGLEQLRTLGVLYWKLDADKYENDPELEQIRKTRNYSWMDIITICKDSLPNYEEKIKMFFEEHLHLDEEIRYILEGSGYFDVRDKEDKWIRISMEKGDMITLPAGIYHRFTLDEKNYVKAMRLFVGEPVWTPYNRPADHFDARVQYVKFLEGTA.

Residues 1 to 23 are disordered; that stretch reads MVQAWYMDESTADPRMPHRAQPD. Residues histidine 88, histidine 90, glutamate 94, and histidine 133 each coordinate Fe(2+). Ni(2+) contacts are provided by histidine 88, histidine 90, glutamate 94, and histidine 133.

The protein belongs to the acireductone dioxygenase (ARD) family. As to quaternary structure, monomer. Interacts with MMP14. Fe(2+) serves as cofactor. The cofactor is Ni(2+). In terms of tissue distribution, detected in prostate, liver, heart, brain, muscle, kidney and seminal vesicles.

The protein resides in the cytoplasm. Its subcellular location is the nucleus. It localises to the cell membrane. The catalysed reaction is 1,2-dihydroxy-5-(methylsulfanyl)pent-1-en-3-one + O2 = 4-methylsulfanyl-2-oxobutanoate + formate + 2 H(+). It catalyses the reaction 1,2-dihydroxy-5-(methylsulfanyl)pent-1-en-3-one + O2 = 3-(methylsulfanyl)propanoate + CO + formate + 2 H(+). It participates in amino-acid biosynthesis; L-methionine biosynthesis via salvage pathway; L-methionine from S-methyl-5-thio-alpha-D-ribose 1-phosphate: step 5/6. Catalyzes 2 different reactions between oxygen and the acireductone 1,2-dihydroxy-3-keto-5-methylthiopentene (DHK-MTPene) depending upon the metal bound in the active site. Fe-containing acireductone dioxygenase (Fe-ARD) produces formate and 2-keto-4-methylthiobutyrate (KMTB), the alpha-ketoacid precursor of methionine in the methionine recycle pathway. Ni-containing acireductone dioxygenase (Ni-ARD) produces methylthiopropionate, carbon monoxide and formate, and does not lie on the methionine recycle pathway. Also down-regulates cell migration mediated by MMP14. This Rattus norvegicus (Rat) protein is Acireductone dioxygenase (Adi1).